A 334-amino-acid polypeptide reads, in one-letter code: Succinylglutamate desuccinylase (334 aa).

3 residues coordinate Zn(2+): histidine 59, glutamate 62, and histidine 151. The active site involves glutamate 215.

It belongs to the AspA/AstE family. Succinylglutamate desuccinylase subfamily. Zn(2+) is required as a cofactor.

The enzyme catalyses N-succinyl-L-glutamate + H2O = L-glutamate + succinate. It functions in the pathway amino-acid degradation; L-arginine degradation via AST pathway; L-glutamate and succinate from L-arginine: step 5/5. Functionally, transforms N(2)-succinylglutamate into succinate and glutamate. This chain is Succinylglutamate desuccinylase, found in Pseudomonas fluorescens (strain SBW25).